The sequence spans 330 residues: Taste receptor type 2 member 117 (330 aa).

Residues 1-16 (MKHFWKILSVISQSTL) are Extracellular-facing. The helical transmembrane segment at 17–37 (SVILIVELVIGIIGNGFMVLV) threads the bilayer. The Cytoplasmic segment spans residues 38–53 (HCMDWVKKKKMSLVNQ). The chain crosses the membrane as a helical span at residues 54–74 (ILTALSISRIFQLCLLFISLV). The Extracellular segment spans residues 75-95 (INFSYTDLTTSSRMIQVMYNA). N-linked (GlcNAc...) asparagine glycosylation occurs at asparagine 76. The chain crosses the membrane as a helical span at residues 96–116 (WILANHFSIWIATCLTVLYFL). Topologically, residues 117 to 135 (KIANFSNSFFLYLKWRVEK) are cytoplasmic. A helical transmembrane segment spans residues 136–156 (VVSVTLLVSLLLLILNILLTN). Residues 157–190 (LETDMWTNEYQRNISCSFSSHYYAKCHRQVLRLH) lie on the Extracellular side of the membrane. A glycan (N-linked (GlcNAc...) asparagine) is linked at asparagine 169. The chain crosses the membrane as a helical span at residues 191–211 (IIFLSVPVVLSLSTFLLLIFS). Topologically, residues 212–239 (LWTHHKRMQQHVQGGRDARTTAHFKALQ) are cytoplasmic. A helical membrane pass occupies residues 240-260 (TVIAFFLLYSIFILSVLIQIW). The Extracellular segment spans residues 261 to 269 (KYELLKKNL). The chain crosses the membrane as a helical span at residues 270–290 (FVVFCEVVYIAFPTFHSYILI). At 291–330 (VGDMKLRQACLPLCIIAAEIQTTLCRNFRSLKYFRLCCIF) the chain is on the cytoplasmic side.

The protein belongs to the G-protein coupled receptor T2R family.

The protein localises to the membrane. In terms of biological role, putative taste receptor which may play a role in the perception of bitterness. This Mus musculus (Mouse) protein is Taste receptor type 2 member 117.